The following is a 369-amino-acid chain: Prenyltransferase malB (369 aa).

Residue E87 participates in substrate binding. Dimethylallyl diphosphate is bound by residues R100 and Y189. Y191 serves as a coordination point for substrate.

The protein belongs to the tryptophan dimethylallyltransferase family.

Its function is as follows. Prenyltransferase; part of the gene cluster that mediates the biosynthesis of malbrancheamide, a dichlorinated fungal indole alkaloid that belongs to a family of natural products containing a characteristic bicyclo[2.2.2]diazaoctane core. The first step of malbrancheamide biosynthesis involves coupling of L-proline and L-tryptophan by malG, a bimodular NRPS, to produce L-Pro-L-Trp aldehyde through reductive offloading. This compound undergoes spontaneous cyclization and dehydration to give a dienamine which is reverse prenylated at C-2 by malE. The other prenyltransferase present in the cluster, malB, displays modest activity, suggesting that may be a redundant gene in the pathway. Subsequently, a [4+2] Diels-Alder cyclo-addition catalyzed by the bifunctional enzyme malC forms the characteristic bicyclo[2.2.2]diazaoctane ring of premalbrancheamid. Finally, the flavin-dependent halogenase malA catalyzes the iterative dichlorination of the indole ring of premalbrancheamide to yield C-9 monochlorinated malbrancheamide B, C-8 monochlorinated isomalbrancheamide B, and dichlorinated malbrancheamide. MalA is also able to brominate premalbrancheamide at C-9 to yield malbrancheamide C, and, to a lesser extend, at C-8 to yield isomalbrancheamide C. Finally, malA can brominate C-9 monochlorinated malbrancheamide B at C-8 to yield malbrancheamide D, or C-8 monochlorinated isomalbrancheamide B at C-9 to produce isomalbrancheamide D. The sequence is that of Prenyltransferase malB from Malbranchea aurantiaca.